A 658-amino-acid chain; its full sequence is Aspartate--tRNA ligase, mitochondrial (658 aa).

Residue E198 participates in L-aspartate binding. The segment at 226–229 (QQYK) is aspartate. R248 contributes to the L-aspartate binding site. ATP contacts are provided by residues 248-250 (RDE) and E553. An L-aspartate-binding site is contributed by R560. 604-607 (GFDR) is an ATP binding site.

It belongs to the class-II aminoacyl-tRNA synthetase family. Type 1 subfamily.

Its subcellular location is the mitochondrion matrix. The catalysed reaction is tRNA(Asp) + L-aspartate + ATP = L-aspartyl-tRNA(Asp) + AMP + diphosphate. Functionally, catalyzes the attachment of aspartate to tRNA(Asp) in the mitochondrion. The protein is Aspartate--tRNA ligase, mitochondrial (MSD1) of Saccharomyces cerevisiae (strain ATCC 204508 / S288c) (Baker's yeast).